A 71-amino-acid chain; its full sequence is 8.6 kDa protein (71 aa).

This Pseudomonas phage Pf1 (Bacteriophage Pf1) protein is 8.6 kDa protein.